A 420-amino-acid chain; its full sequence is Serine/threonine-protein phosphatase 4 regulatory subunit 2-A (420 aa).

Residues 157 to 420 (GNTSAFPDRN…ETADDNMEQD (264 aa)) are disordered. Residues 182 to 195 (SLSSNVATNGLPDS) show a composition bias toward polar residues. Residues 196 to 210 (TESKEQASEQSERTV) show a composition bias toward basic and acidic residues. Low complexity predominate over residues 212 to 224 (ESSASEAESHSGA). A compositionally biased stretch (basic and acidic residues) spans 229–250 (HRDDEDATHAETHEAKRLKFDK). A compositionally biased stretch (acidic residues) spans 251 to 266 (EEEEEEDDEEEDEDGD). The span at 267–276 (EIKKELDEPH) shows a compositional bias: basic and acidic residues. The span at 278–296 (PCTSVAESSSDVPQSSTDV) shows a compositional bias: polar residues. The segment covering 318 to 332 (GVDRSTSEDSPDPSH) has biased composition (basic and acidic residues). Over residues 346-364 (AEEEEEEESAEAQETEETN) the composition is skewed to acidic residues. Residues 368-394 (SSSSNNSSDEGVSSAETPSASPSSSTE) show a composition bias toward low complexity. Over residues 411 to 420 (ETADDNMEQD) the composition is skewed to acidic residues.

The protein belongs to the PPP4R2 family. Serine/threonine-protein phosphatase 4 (PP4) occurs in different assemblies of the catalytic and one or more regulatory subunits.

Regulatory subunit of serine/threonine-protein phosphatase 4 (PP4C). This chain is Serine/threonine-protein phosphatase 4 regulatory subunit 2-A (ppp4r2a), found in Danio rerio (Zebrafish).